A 136-amino-acid chain; its full sequence is Acidic phospholipase A2 CC-PLA2-2 (136 aa).

A signal peptide spans 1–16 (MRTLWIVAVWLMGVEG). Cystine bridges form between C42/C129, C44/C60, C59/C109, C65/C136, C66/C102, C73/C95, and C90/C100. Y43, G45, and G47 together coordinate Ca(2+). The active site involves H63. D64 serves as a coordination point for Ca(2+). Residue D103 is part of the active site.

The protein belongs to the phospholipase A2 family. Group II subfamily. D49 sub-subfamily. Requires Ca(2+) as cofactor. Glycosylated (2.5%). Expressed by the venom gland.

It localises to the secreted. The catalysed reaction is a 1,2-diacyl-sn-glycero-3-phosphocholine + H2O = a 1-acyl-sn-glycero-3-phosphocholine + a fatty acid + H(+). Functionally, snake venom phospholipase A2 that inhibits blood coagulation and platelet aggregation induced by ADP and arachidonic acid. Inhibits tumor cell adhesion and migration in a dose-dependent manner. Abolishes the attachment of human brain microvascular endothelial cells (HBMEC) to fibrinogen (IC(50)=0.2 uM) and dramatically reduces its adhesion to fibronectin (IC(50)=0.3 uM), whereas no effect is observed on type I collagen, vitronectin or laminin 1. Also blocks the cell migration toward fibronectin and fibrinogen. These effects are not dependent of the catalytic activity, but are mediated by alpha-5/beta-1 (ITGA5/ITGB1) and alpha-v-containing (ITGAV) integrins. Also shows anti-angiogenic activity in chicken chorioallantoix membrane assay. Has a relatively high enzymatic activity. PLA2 catalyzes the calcium-dependent hydrolysis of the 2-acyl groups in 3-sn-phosphoglycerides. The chain is Acidic phospholipase A2 CC-PLA2-2 from Cerastes cerastes (Horned desert viper).